A 425-amino-acid chain; its full sequence is Raffinose permease (425 aa).

The Cytoplasmic segment spans residues M1–D11. A helical membrane pass occupies residues F12 to F32. Residues L33–T48 are Periplasmic-facing. The helical transmembrane segment at G49 to I69 threads the bilayer. Over S70–N78 the chain is Cytoplasmic. A helical transmembrane segment spans residues L79–A99. Over P100–N105 the chain is Periplasmic. The helical transmembrane segment at I106–G126 threads the bilayer. The Cytoplasmic portion of the chain corresponds to A127–R147. The chain crosses the membrane as a helical span at residues M148–D168. Position 169 (P169) is a topological domain, periplasmic. A helical transmembrane segment spans residues S170–A190. Over R191–V229 the chain is Cytoplasmic. A helical transmembrane segment spans residues L230–F250. Over R251–G265 the chain is Periplasmic. Residues F266–I286 form a helical membrane-spanning segment. Residues N287–T294 are Cytoplasmic-facing. A helical transmembrane segment spans residues L295–M315. T316 is a topological domain (periplasmic). A helical membrane pass occupies residues E317–F337. Over K338 to T351 the chain is Cytoplasmic. A helical transmembrane segment spans residues V352 to A372. At G373–N383 the chain is on the periplasmic side. A helical membrane pass occupies residues T384–S404. The Cytoplasmic portion of the chain corresponds to S405–N425.

It belongs to the major facilitator superfamily. Oligosaccharide:H(+) symporter (OHS) (TC 2.A.1.5) family. In terms of assembly, monomer.

The protein localises to the cell inner membrane. In terms of biological role, responsible for transport of raffinose into the cell. Can also transport lactose and melibiose. Has weak activity with maltose. This chain is Raffinose permease, found in Escherichia coli.